Here is a 623-residue protein sequence, read N- to C-terminus: E3 ubiquitin-protein ligase ORTHRUS 5 (623 aa).

Residues 12 to 62 form a PHD-type zinc finger; sequence DGVCMRCQVNPPSEETLTCGTCVTPWHVSCLLPESLASSTGDWECPDCSGV. The segment at 129-169 adopts an RING-type 1 zinc-finger fold; that stretch reads CSICIQLPERPVTTPCGHNFCLKCFEKWAVGQGKLTCMICR. The region spanning 258 to 407 is the YDG domain; it reads TRNQGVLVGE…HKMCRYLFVR (150 aa). An RING-type 2 zinc finger spans residues 498–555; that stretch reads CQICRKVLSLPVTTPCAHNFCKACLEAKFAGITQLRDRSNGVRKLRAKKNIMTCPCCT. A disordered region spans residues 580-623; the sequence is KSEEEAEVAESSNISEEEGEEESEPPTKKIKMDKNSVGGTSLSA. Residues 594-603 are compositionally biased toward acidic residues; that stretch reads SEEEGEEESE. Residues 604–613 are compositionally biased toward basic and acidic residues; that stretch reads PPTKKIKMDK.

As to expression, expressed in inflorescences.

Its subcellular location is the nucleus. It carries out the reaction S-ubiquitinyl-[E2 ubiquitin-conjugating enzyme]-L-cysteine + [acceptor protein]-L-lysine = [E2 ubiquitin-conjugating enzyme]-L-cysteine + N(6)-ubiquitinyl-[acceptor protein]-L-lysine.. It functions in the pathway protein modification; protein ubiquitination. E3 ubiquitin-protein ligase. Participates in CpG methylation-dependent transcriptional regulation and epigenetic transcriptional silencing. Mediates ubiquitination with the E2 ubiquitin-conjugating enzyme UBC11. The chain is E3 ubiquitin-protein ligase ORTHRUS 5 (ORTH5) from Arabidopsis thaliana (Mouse-ear cress).